The primary structure comprises 104 residues: Protein EPIDERMAL PATTERNING FACTOR 1 (104 aa).

The first 20 residues, 1–20 (MKSLLLLAFFLSFFFGSLLA), serve as a signal peptide directing secretion. Disulfide bonds link cysteine 60–cysteine 94, cysteine 64–cysteine 70, cysteine 67–cysteine 96, and cysteine 79–cysteine 88. An N-linked (GlcNAc...) asparagine glycan is attached at asparagine 98.

The protein belongs to the plant cysteine rich small secretory peptide family. Epidermal patterning factor subfamily. Interacts with ERECTA and ERL1, but not with TMM. As to expression, expressed in shoots, but not in roots. Mostly localized in developing leaves, specifically in meristemoids, guard mother cells (GMCs), and young guard cells.

It localises to the secreted. Controls stomatal patterning. Regulates asymmetric cell division during guard cell differentiation. Mediates stomatal development inhibition. Not cleaved by the protease CRSP (AC Q9LNU1). MEPF1: mobile signal controlling stomatal development in a non-cell-autonomous manner. Uses ERL1 as major receptor. May act by competing with somatogen (AC Q9SV72) for the same receptor, TMM (AC Q9SSD1). This chain is Protein EPIDERMAL PATTERNING FACTOR 1, found in Arabidopsis thaliana (Mouse-ear cress).